The primary structure comprises 136 residues: Peptide methionine sulfoxide reductase B5 (136 aa).

Positions 14–135 constitute a MsrB domain; the sequence is DEEWRAVLSP…NSVSIKFTPA (122 aa). Cys53, Cys56, Cys99, and Cys102 together coordinate Zn(2+). The cysteines at positions 71 and 124 are disulfide-linked. Cys124 (nucleophile) is an active-site residue.

Belongs to the MsrB Met sulfoxide reductase family. The cofactor is Zn(2+).

It localises to the cytoplasm. Its subcellular location is the cytosol. The enzyme catalyses L-methionyl-[protein] + [thioredoxin]-disulfide + H2O = L-methionyl-(R)-S-oxide-[protein] + [thioredoxin]-dithiol. Its function is as follows. Catalyzes the reduction of methionine sulfoxide (MetSO) to methionine in proteins. Plays a protective role against oxidative stress by restoring activity to proteins that have been inactivated by methionine oxidation. MSRB family specifically reduces the MetSO R-enantiomer. This is Peptide methionine sulfoxide reductase B5 (MSRB5) from Oryza sativa subsp. japonica (Rice).